Here is a 208-residue protein sequence, read N- to C-terminus: Orotidine 5'-phosphate decarboxylase (208 aa).

Residues Asp-7, Lys-29, 57-66 (DLKLADIPNT), Ser-109, 162-172 (PGIGAQGGKAK), Gly-185, and Arg-186 each bind substrate. The active-site Proton donor is Lys-59.

This sequence belongs to the OMP decarboxylase family. Type 1 subfamily. Homodimer.

The enzyme catalyses orotidine 5'-phosphate + H(+) = UMP + CO2. It functions in the pathway pyrimidine metabolism; UMP biosynthesis via de novo pathway; UMP from orotate: step 2/2. Catalyzes the decarboxylation of orotidine 5'-monophosphate (OMP) to uridine 5'-monophosphate (UMP). The polypeptide is Orotidine 5'-phosphate decarboxylase (pyrF) (Pyrococcus horikoshii (strain ATCC 700860 / DSM 12428 / JCM 9974 / NBRC 100139 / OT-3)).